Reading from the N-terminus, the 372-residue chain is Aminomethyltransferase (372 aa).

It belongs to the GcvT family. The glycine cleavage system is composed of four proteins: P, T, L and H.

It carries out the reaction N(6)-[(R)-S(8)-aminomethyldihydrolipoyl]-L-lysyl-[protein] + (6S)-5,6,7,8-tetrahydrofolate = N(6)-[(R)-dihydrolipoyl]-L-lysyl-[protein] + (6R)-5,10-methylene-5,6,7,8-tetrahydrofolate + NH4(+). In terms of biological role, the glycine cleavage system catalyzes the degradation of glycine. This chain is Aminomethyltransferase, found in Rubrobacter xylanophilus (strain DSM 9941 / JCM 11954 / NBRC 16129 / PRD-1).